A 474-amino-acid chain; its full sequence is Glutamine synthetase (474 aa).

The GS beta-grasp domain maps to 15-99 (EDVQFIDVRF…MTFFIHDPIT (85 aa)). In terms of domain architecture, GS catalytic spans 107–474 (PRNIAKKAET…PYEFTLYYDI (368 aa)). Mg(2+)-binding residues include Glu-132 and Glu-134. Glu-210 contributes to the ATP binding site. 2 residues coordinate Mg(2+): Glu-215 and Glu-223. L-glutamate contacts are provided by residues 267 to 268 (NG) and Gly-268. His-272 contributes to the Mg(2+) binding site. Residues 274-276 (HSS) and Ser-276 each bind ATP. Residues Arg-325, Glu-331, and Arg-343 each contribute to the L-glutamate site. ATP-binding residues include Arg-343, Arg-348, and Lys-357. Glu-362 contributes to the Mg(2+) binding site. Arg-364 provides a ligand contact to L-glutamate. At Tyr-402 the chain carries O-AMP-tyrosine.

The protein belongs to the glutamine synthetase family. In terms of assembly, oligomer of 12 subunits arranged in the form of two hexagons. Requires Mg(2+) as cofactor.

It is found in the cytoplasm. The catalysed reaction is L-glutamate + NH4(+) + ATP = L-glutamine + ADP + phosphate + H(+). Its activity is regulated as follows. The activity of this enzyme could be controlled by adenylation under conditions of abundant glutamine. In terms of biological role, catalyzes the ATP-dependent biosynthesis of glutamine from glutamate and ammonia. The sequence is that of Glutamine synthetase from Frankia alni.